Consider the following 391-residue polypeptide: UPF0229 protein BAA_0633 (391 aa).

Positions 1–16 are enriched in polar residues; it reads MGEENQPNYTISQENW. Disordered stretches follow at residues 1-31 and 80-117; these read MGEE…RHQE and HVGQ…GDAA. Over residues 21–31 the composition is skewed to basic and acidic residues; sequence KGYDDQQRHQE. The span at 98–115 shows a compositional bias: gly residues; sequence GSGGQKQKGPGKGQGAGD.

It belongs to the UPF0229 family.

This Bacillus anthracis (strain A0248) protein is UPF0229 protein BAA_0633.